A 2273-amino-acid chain; its full sequence is Acetyl-CoA carboxylase, mitochondrial (2273 aa).

Residues 1–104 constitute a mitochondrion transit peptide; it reads KGKTITHGQS…RGNIHKHTRL (104 aa). A Biotin carboxylation domain is found at 134-635; sequence VISKILIANN…STGWLDDLIL (502 aa). An ATP-grasp domain is found at 292-484; sequence KTNFVSVPDD…LPATQLQIAM (193 aa). 332-337 is an ATP binding site; the sequence is GGGGKG. Arg-459 is an active-site residue. Positions 763-837 constitute a Biotinyl-binding domain; it reads LEAELNPTQV…EAGDVIAKLT (75 aa). Lys-804 is subject to N6-biotinyllysine. The 336-residue stretch at 1532–1867 folds into the CoA carboxyltransferase N-terminal domain; it reads PYSVKDWLQP…KRDMSPPLLE (336 aa). Positions 1532–2187 are carboxyltransferase; that stretch reads PYSVKDWLQP…EGQVIKRLQK (656 aa). Residues Arg-1776, Lys-2080, and Arg-2082 each coordinate CoA. In terms of domain architecture, CoA carboxyltransferase C-terminal spans 1871 to 2187; sequence RWDRDVDFKP…EGQVIKRLQK (317 aa).

Requires biotin as cofactor.

The protein resides in the mitochondrion. The catalysed reaction is hydrogencarbonate + acetyl-CoA + ATP = malonyl-CoA + ADP + phosphate + H(+). It carries out the reaction N(6)-biotinyl-L-lysyl-[protein] + hydrogencarbonate + ATP = N(6)-carboxybiotinyl-L-lysyl-[protein] + ADP + phosphate + H(+). It functions in the pathway lipid metabolism; malonyl-CoA biosynthesis; malonyl-CoA from acetyl-CoA: step 1/1. Its function is as follows. Catalyzes the rate-limiting reaction in the mitochondrial fatty acid synthesis (FAS) type II pathway. Responsible for the production of the mitochondrial malonyl-CoA, used for the biosynthesis of the cofactor lipoic acid. This protein carries three functions: biotin carboxyl carrier protein, biotin carboxylase, and carboxyltransferase. This Saccharomyces cerevisiae (strain JAY291) (Baker's yeast) protein is Acetyl-CoA carboxylase, mitochondrial (HFA1).